The chain runs to 114 residues: Large ribosomal subunit protein uL22 (114 aa).

The protein belongs to the universal ribosomal protein uL22 family. As to quaternary structure, part of the 50S ribosomal subunit.

Its function is as follows. This protein binds specifically to 23S rRNA; its binding is stimulated by other ribosomal proteins, e.g. L4, L17, and L20. It is important during the early stages of 50S assembly. It makes multiple contacts with different domains of the 23S rRNA in the assembled 50S subunit and ribosome. In terms of biological role, the globular domain of the protein is located near the polypeptide exit tunnel on the outside of the subunit, while an extended beta-hairpin is found that lines the wall of the exit tunnel in the center of the 70S ribosome. This is Large ribosomal subunit protein uL22 from Aeromonas salmonicida (strain A449).